Reading from the N-terminus, the 137-residue chain is Phosphoribosyl-AMP cyclohydrolase (137 aa).

D84 provides a ligand contact to Mg(2+). Residue C85 participates in Zn(2+) binding. The Mg(2+) site is built by D86 and D88. The Zn(2+) site is built by C101 and C108.

The protein belongs to the PRA-CH family. Homodimer. It depends on Mg(2+) as a cofactor. Zn(2+) is required as a cofactor.

It localises to the cytoplasm. It carries out the reaction 1-(5-phospho-beta-D-ribosyl)-5'-AMP + H2O = 1-(5-phospho-beta-D-ribosyl)-5-[(5-phospho-beta-D-ribosylamino)methylideneamino]imidazole-4-carboxamide. It participates in amino-acid biosynthesis; L-histidine biosynthesis; L-histidine from 5-phospho-alpha-D-ribose 1-diphosphate: step 3/9. In terms of biological role, catalyzes the hydrolysis of the adenine ring of phosphoribosyl-AMP. The protein is Phosphoribosyl-AMP cyclohydrolase of Chlorobium phaeobacteroides (strain DSM 266 / SMG 266 / 2430).